A 346-amino-acid chain; its full sequence is MLPCFQLLRIGGGRGVDLYTFHPPSGAGCTYRLGCRADLCDVALRPQQEPGFISEVHAELHAERRGDDWRVSLEDHSSQGTLVNNVRLPRGHRLELSDGDLLTFGPEGPPGTSPSEFYMFQQVRVKPQDFAAITIPRSRGEEGETRAGFRPMLPSQGAPQRPLSTLSPTPKATLILNSIGSLSKLHLQPLTFSRSGSGPQNPPVSTTPGEVRTTPSAPPPRNRRKSAHRVLAELDDEREAPESLPPVLIEPRKKLLRVEKTPPTPSGNRRGRPRKHPVSIPRAPPAAGGGEPCAAPCCCLPQEETVAWVQCDGCDTWFHVACVGCSIQAAKEADFRCPGCRVGIQS.

The region spanning 31–88 (YRLGCRADLCDVALRPQQEPGFISEVHAELHAERRGDDWRVSLEDHSSQGTLVNNVRL) is the FHA domain. Position 78 is a phosphoserine (Ser-78). Disordered stretches follow at residues 136–168 (PRSR…TLSP) and 190–289 (LTFS…AAGG). Residues 138-147 (SRGEEGETRA) show a composition bias toward basic and acidic residues. Positions 190 to 208 (LTFSRSGSGPQNPPVSTTP) are enriched in polar residues. Positions 250-260 (EPRKKLLRVEK) are enriched in basic and acidic residues. The PHD-type zinc-finger motif lies at 294–343 (AAPCCCLPQEETVAWVQCDGCDTWFHVACVGCSIQAAKEADFRCPGCRVG). Cys-297, Cys-299, Cys-311, Cys-314, His-319, Cys-322, Cys-337, and Cys-340 together coordinate Zn(2+).

It is found in the nucleus. Potential transcription factor that may play a role in the regulation of genes involved in cell cycle G1/S transition. May bind to regulatory elements of genes, including the promoter of the transcription factor FOXO1. In Sus scrofa (Pig), this protein is Transcription factor 19 (TCF19).